A 283-amino-acid chain; its full sequence is Pantothenate synthetase (283 aa).

An ATP-binding site is contributed by 26 to 33 (MGNLHEGH). Histidine 33 serves as the catalytic Proton donor. Glutamine 57 lines the (R)-pantoate pocket. Glutamine 57 lines the beta-alanine pocket. 144-147 (GKKD) contacts ATP. Position 150 (glutamine 150) interacts with (R)-pantoate. Position 181 to 184 (181 to 184 (LSSR)) interacts with ATP.

It belongs to the pantothenate synthetase family. Homodimer.

The protein resides in the cytoplasm. It catalyses the reaction (R)-pantoate + beta-alanine + ATP = (R)-pantothenate + AMP + diphosphate + H(+). It participates in cofactor biosynthesis; (R)-pantothenate biosynthesis; (R)-pantothenate from (R)-pantoate and beta-alanine: step 1/1. Functionally, catalyzes the condensation of pantoate with beta-alanine in an ATP-dependent reaction via a pantoyl-adenylate intermediate. The chain is Pantothenate synthetase from Variovorax paradoxus (strain S110).